A 223-amino-acid polypeptide reads, in one-letter code: MNIAKLIDHTILKANTTKEDVMKVIEEAKEYKFASVCINPTWVKLAADELAGHDVDVCTVIGFPLGASTTETKAFETKDAIAKGATEVDMVINVGALKDGDNELVEKDIYEVVQAAKGKALVKVIIETCLLTDEEKVRACELSVKAGADFVKTSTGFSTGGATAEDIALMRKTVGPNVGVKASGGVRTREDADKMVAAGASRVGASASVAIVLNDAKGATDNY.

Aspartate 89 (proton donor/acceptor) is an active-site residue. Catalysis depends on lysine 152, which acts as the Schiff-base intermediate with acetaldehyde. Lysine 181 (proton donor/acceptor) is an active-site residue.

This sequence belongs to the DeoC/FbaB aldolase family. DeoC type 1 subfamily.

It is found in the cytoplasm. It catalyses the reaction 2-deoxy-D-ribose 5-phosphate = D-glyceraldehyde 3-phosphate + acetaldehyde. It functions in the pathway carbohydrate degradation; 2-deoxy-D-ribose 1-phosphate degradation; D-glyceraldehyde 3-phosphate and acetaldehyde from 2-deoxy-alpha-D-ribose 1-phosphate: step 2/2. Catalyzes a reversible aldol reaction between acetaldehyde and D-glyceraldehyde 3-phosphate to generate 2-deoxy-D-ribose 5-phosphate. This Bacillus cereus (strain G9842) protein is Deoxyribose-phosphate aldolase.